The chain runs to 361 residues: Histidinol-phosphate aminotransferase (361 aa).

An N6-(pyridoxal phosphate)lysine modification is found at Lys-218.

This sequence belongs to the class-II pyridoxal-phosphate-dependent aminotransferase family. Histidinol-phosphate aminotransferase subfamily. Homodimer. Pyridoxal 5'-phosphate is required as a cofactor.

The catalysed reaction is L-histidinol phosphate + 2-oxoglutarate = 3-(imidazol-4-yl)-2-oxopropyl phosphate + L-glutamate. It participates in amino-acid biosynthesis; L-histidine biosynthesis; L-histidine from 5-phospho-alpha-D-ribose 1-diphosphate: step 7/9. This chain is Histidinol-phosphate aminotransferase, found in Ruegeria pomeroyi (strain ATCC 700808 / DSM 15171 / DSS-3) (Silicibacter pomeroyi).